Consider the following 402-residue polypeptide: Mannonate dehydratase (402 aa).

This sequence belongs to the mannonate dehydratase family. Requires Fe(2+) as cofactor. It depends on Mn(2+) as a cofactor.

The catalysed reaction is D-mannonate = 2-dehydro-3-deoxy-D-gluconate + H2O. Its pathway is carbohydrate metabolism; pentose and glucuronate interconversion. Its function is as follows. Catalyzes the dehydration of D-mannonate. The chain is Mannonate dehydratase from Rhizobium meliloti (strain 1021) (Ensifer meliloti).